Here is a 73-residue protein sequence, read N- to C-terminus: MAIFRRKNSPIKKDDFIDYKDVELLSKFLTEQGKILPRRITGLTMKQQSRLTKAVKRARILSLLPFINRDMIL.

This sequence belongs to the bacterial ribosomal protein bS18 family. In terms of assembly, part of the 30S ribosomal subunit.

Its subcellular location is the plastid. It localises to the chloroplast. This chain is Small ribosomal subunit protein bS18c (rps18), found in Guillardia theta (Cryptophyte).